Consider the following 464-residue polypeptide: Cerebellar degeneration-related protein 2-like (464 aa).

Coiled coils occupy residues 31–154 (AAEL…RRKT), 201–264 (VSSL…KSRV), and 342–379 (MSILREVDEQYHALLEKYEELLGKCRRHEESLRHAEVQ). The interval 371-419 (ESLRHAEVQTSRPVSRDPSMKECRVAEPQQPPPTPPQTPSTPEALEGIS) is disordered. Over residues 384–395 (VSRDPSMKECRV) the composition is skewed to basic and acidic residues. The segment covering 399-409 (QQPPPTPPQTP) has biased composition (pro residues).

Belongs to the CDR2 family.

This Danio rerio (Zebrafish) protein is Cerebellar degeneration-related protein 2-like (cdr2l).